A 205-amino-acid polypeptide reads, in one-letter code: Heme ligase (205 aa).

In terms of domain architecture, FAS1 spans 48–203; that stretch reads KRTIINLIYS…GVVHIVDKPI (156 aa). Positions 154–172 are required for binding to host hemoglobin; sequence LRNLLNNDLIVKIEGEFKH. 2 heme binding domain regions span residues 171 to 181 and 191 to 200; these read KHCNHSIYLNG and CHNGVVHIVD.

Component of the hemozoin formation complex (HFC) composed of falcipains FP2A and/or FP2B, plasmepsins PMII, PMIII/HAP and PMIV, heme detoxifying protein HDP and falcilysin FLN. The HFC complex is involved in hemoglobin degradation and detoxification of heme in the food vacuole during the asexual blood stage. Interacts with falcipain 2; the interaction is direct and enhances HDP catalytic activity. Interacts with host hemoglobin.

Its subcellular location is the vacuole. The protein resides in the host cytoplasm. It is found in the host cytosol. It catalyses the reaction 2 Fe(III)-heme b = beta-hematin. Heme detoxifying enzyme that converts heme to crystalline hemozoin (beta-hematin) to protect the organism from the toxic effects of heme. During its development, P.falciparum proteolyzes vast amounts of host hemoglobin, leading to heme release. The sequence is that of Heme ligase from Plasmodium falciparum (isolate 3D7).